The primary structure comprises 428 residues: Ribulose bisphosphate carboxylase (428 aa).

Catalysis depends on Lys151, which acts as the Proton acceptor. Lys153 contacts substrate. The Mg(2+) site is built by Lys177, Asp179, and Glu180. Position 177 is an N6-carboxylysine (Lys177). The active-site Proton acceptor is the His270. Substrate contacts are provided by residues Arg271, His303, 354-356 (SGG), and 376-379 (QFGG).

The protein belongs to the RuBisCO large chain family. Type III subfamily. As to quaternary structure, homodimer or homodecamer. In contrast to form I RuBisCO, the form III RuBisCO is composed solely of large subunits. Mg(2+) is required as a cofactor.

It carries out the reaction 2 (2R)-3-phosphoglycerate + 2 H(+) = D-ribulose 1,5-bisphosphate + CO2 + H2O. The catalysed reaction is D-ribulose 1,5-bisphosphate + O2 = 2-phosphoglycolate + (2R)-3-phosphoglycerate + 2 H(+). Catalyzes the addition of molecular CO(2) and H(2)O to ribulose 1,5-bisphosphate (RuBP), generating two molecules of 3-phosphoglycerate (3-PGA). Functions in an archaeal AMP degradation pathway, together with AMP phosphorylase and R15P isomerase. The polypeptide is Ribulose bisphosphate carboxylase (Methanosarcina barkeri (strain Fusaro / DSM 804)).